Reading from the N-terminus, the 954-residue chain is Protein teashirt (954 aa).

3 disordered regions span residues 20 to 91 (LPTA…SLPS), 167 to 207 (ESAE…PQLG), and 276 to 331 (VKGG…GSGA). Over residues 47–57 (HGGGAGSGGVG) the composition is skewed to gly residues. Positions 292–303 (SKATTPQAASQP) are enriched in polar residues. Residues 318–328 (SGGGSGGGAAG) are compositionally biased toward gly residues. A C2H2-type 1 zinc finger spans residues 354-378 (FRCVWCKQSFPTLEALTTHMKDSKH). A disordered region spans residues 383–444 (VPPFGNLPSN…YRGDPPTPLP (62 aa)). A compositionally biased stretch (low complexity) spans 417–428 (SGSASNHSPSAN). C2H2-type zinc fingers lie at residues 466–490 (LKCM…ETQH) and 533–557 (LTCK…KNNH). Disordered regions lie at residues 563 to 622 (LQSA…DKND), 689 to 714 (FDTP…TSPV), and 748 to 935 (TSSE…NLTA). Residues 568-578 (ARKRPAPKKRE) are compositionally biased toward basic residues. The span at 579–588 (KSLPVRKLLE) shows a compositional bias: basic and acidic residues. A compositionally biased stretch (low complexity) spans 696–712 (ASLPASSPSNSSTKNTS). 2 positions are modified to phosphoserine: S750 and S758. Residues 778 to 807 (GHDEESSKPAIKQEREAESKPVKMEIKSEF) show a composition bias toward basic and acidic residues. Over residues 842 to 851 (PKTPSSAASP) the composition is skewed to low complexity. Composition is skewed to polar residues over residues 862 to 885 (AESQ…GSSE) and 893 to 907 (DSLN…SLGS). Low complexity predominate over residues 910 to 926 (AGANSRAKLAAAAAAGG).

The protein belongs to the teashirt C2H2-type zinc-finger protein family. As to quaternary structure, binds arm. As to expression, shows a dynamic expression pattern during embryogenesis. Expressed in the embryonic trunk region (PS 3-13) with expression strongest in the thoracic segments. Expressed in a small group of cells corresponding to the anal tuft from stage 14. Strongly expressed in the embryonic ventral nerve cord. Also expressed in the proximal domain of the leg imaginal disk and in the region of the wing disk that will give rise to the proximal wing hinge. Expressed at high levels in the anterior and central embryonic midgut mesoderm and in the embryonic midgut endoderm. Expressed at a low level in more posterior visceral mesoderm of the gut. From stage 12 onwards, tsh and tio are colocalized in some cells of the CNS, trunk epidermis, hindgut and Malpighian tubules.

It localises to the nucleus. The protein localises to the cytoplasm. In terms of biological role, homeotic protein that acts downstream of Arm in the Wg cascade during embryogenesis to determine segment identity throughout the entire trunk. Acts cooperatively with other trunk homeotic proteins to repress head homeotic genes and therefore repress head segmental identity. Necessary, in combination with Scr, for the formation of the prothoracic segment. Promotes eye development in the dorsal region of the eye disk and suppresses eye development in the ventral region in combination with Wg-signaling and several early dorso-ventral eye patterning genes. Required for proper development of proximal leg segments. Has differential functions along the dorso-ventral axs of the antennal and leg disks. May play a role in wing hinge development. Possible involvement in chromatin structure for modulation of transcription. Binds DNA and can act as both a transcriptional repressor and activator. Positively regulates its own expression as well as that of Dll. Negatively regulates the expression of mod. Required for Wg-mediated transcriptional repression of Ubx in the midgut. Also represses transcription of lab in the midgut and is necessary for the proper formation of anterior and central midgut structures. Tiptop (tio) and teashirt (tsh) have, on the whole, common activities. Tio and tsh repress each other's expression and tsh has a crucial role for trunk patterning that is in part masked by ectopic expression of tiptop. Both genes share a common activity required for the activation of Ser and svb and the maintenance of en and wg. This Drosophila melanogaster (Fruit fly) protein is Protein teashirt (tsh).